The chain runs to 320 residues: o-succinylbenzoate synthase (320 aa).

Lys-133 serves as the catalytic Proton donor. Mg(2+) is bound by residues Asp-161, Glu-190, and Asp-213. Lys-235 serves as the catalytic Proton acceptor.

Belongs to the mandelate racemase/muconate lactonizing enzyme family. MenC type 1 subfamily. It depends on a divalent metal cation as a cofactor.

It carries out the reaction (1R,6R)-6-hydroxy-2-succinyl-cyclohexa-2,4-diene-1-carboxylate = 2-succinylbenzoate + H2O. It participates in quinol/quinone metabolism; 1,4-dihydroxy-2-naphthoate biosynthesis; 1,4-dihydroxy-2-naphthoate from chorismate: step 4/7. The protein operates within quinol/quinone metabolism; menaquinone biosynthesis. In terms of biological role, converts 2-succinyl-6-hydroxy-2,4-cyclohexadiene-1-carboxylate (SHCHC) to 2-succinylbenzoate (OSB). This chain is o-succinylbenzoate synthase, found in Escherichia coli O17:K52:H18 (strain UMN026 / ExPEC).